The following is a 119-amino-acid chain: Large ribosomal subunit protein uL22c (119 aa).

The protein belongs to the universal ribosomal protein uL22 family. As to quaternary structure, part of the 50S ribosomal subunit.

It is found in the plastid. The protein resides in the chloroplast. In terms of biological role, this protein binds specifically to 23S rRNA. Its function is as follows. The globular domain of the protein is located near the polypeptide exit tunnel on the outside of the subunit, while an extended beta-hairpin is found that lines the wall of the exit tunnel in the center of the 70S ribosome. The sequence is that of Large ribosomal subunit protein uL22c (rpl22) from Marchantia polymorpha (Common liverwort).